A 236-amino-acid chain; its full sequence is Adenosine 5'-phosphosulfate reductase (236 aa).

[4Fe-4S] cluster is bound by residues C122, C123, C205, and C208. Residue C231 is the Nucleophile; cysteine thiosulfonate intermediate of the active site.

Belongs to the PAPS reductase family. CysH subfamily. Requires [4Fe-4S] cluster as cofactor.

The protein localises to the cytoplasm. It catalyses the reaction [thioredoxin]-disulfide + sulfite + AMP + 2 H(+) = adenosine 5'-phosphosulfate + [thioredoxin]-dithiol. It participates in sulfur metabolism; hydrogen sulfide biosynthesis; sulfite from sulfate. In terms of biological role, catalyzes the formation of sulfite from adenosine 5'-phosphosulfate (APS) using thioredoxin as an electron donor. In Mycolicibacterium smegmatis (strain ATCC 700084 / mc(2)155) (Mycobacterium smegmatis), this protein is Adenosine 5'-phosphosulfate reductase.